We begin with the raw amino-acid sequence, 142 residues long: Small ribosomal subunit protein uS12 (142 aa).

This sequence belongs to the universal ribosomal protein uS12 family. Part of the 30S ribosomal subunit.

With S4 and S5 plays an important role in translational accuracy. Located at the interface of the 30S and 50S subunits. In Methanospirillum hungatei JF-1 (strain ATCC 27890 / DSM 864 / NBRC 100397 / JF-1), this protein is Small ribosomal subunit protein uS12.